A 384-amino-acid chain; its full sequence is uncharacterized protein (384 aa).

This is an uncharacterized protein from Nostoc sp. (strain PCC 7120 / SAG 25.82 / UTEX 2576).